A 333-amino-acid chain; its full sequence is Olfactory receptor 9S13 (333 aa).

Residues 1-35 (MATAVHRNGSLTPVSLRVFVLVGFGGGALTQALLF) lie on the Extracellular side of the membrane. N8 carries N-linked (GlcNAc...) asparagine glycosylation. Residues 36 to 56 (AVFLVLYVVTVLGNLTMIVVI) traverse the membrane as a helical segment. Residues 57–72 (TLDARLHSPMYFFLKN) are Cytoplasmic-facing. A helical transmembrane segment spans residues 73-93 (LSFVDLCYSSAIAPNALANFL). Topologically, residues 94-106 (STSKVISFEACAT) are extracellular. A disulfide bond links C104 and C196. The helical transmembrane segment at 107-127 (QFFFFSLLATTETFLLAVMAY) threads the bilayer. Residues 128 to 150 (DRFMAICSPLRYPVTMCPTTCTR) lie on the Cytoplasmic side of the membrane. A helical transmembrane segment spans residues 151-171 (LVLGTFCVGCLNSIVQTSLTF). At 172–203 (QLPFCSSNRIDHFYCDVPPLLQLACASTALNE) the chain is on the extracellular side. A helical membrane pass occupies residues 204–224 (LFLFGLCGFIIVSTTLAVLVS). The Cytoplasmic segment spans residues 225–251 (YGYITVTILRMHSGSGRHKVFSTCGSH). A helical membrane pass occupies residues 252–272 (LTAVSLFYGTLFVMYAQPGAL). Over 273–278 (TSMEQG) the chain is Extracellular. Residues 279 to 299 (KVVSIFYTLVIPMLNPLIYSL) traverse the membrane as a helical segment. Over 300 to 333 (RNKDVKDALQRLGQRHSLVKAVRGCPAAGGNASV) the chain is Cytoplasmic.

It belongs to the G-protein coupled receptor 1 family.

It localises to the cell membrane. Its function is as follows. Odorant receptor. This is Olfactory receptor 9S13 from Mus musculus (Mouse).